Reading from the N-terminus, the 491-residue chain is Probable CtpA-like serine protease (491 aa).

The segment at Met1–Lys22 is disordered. The segment covering His8–Lys22 has biased composition (polar residues). A helical membrane pass occupies residues Leu31–Val51. In terms of domain architecture, PDZ spans Thr119–Gly201. Catalysis depends on charge relay system residues Ser324, Asp335, and Lys349.

Belongs to the peptidase S41A family.

The protein resides in the cell membrane. The protein is Probable CtpA-like serine protease of Staphylococcus epidermidis (strain ATCC 35984 / DSM 28319 / BCRC 17069 / CCUG 31568 / BM 3577 / RP62A).